Reading from the N-terminus, the 427-residue chain is 4-hydroxy-3-methylbut-2-en-1-yl diphosphate synthase (flavodoxin) (427 aa).

The interval 1–21 (MNKLENTIDSDIAGPAPRHRT) is disordered. 4 residues coordinate [4Fe-4S] cluster: cysteine 310, cysteine 313, cysteine 356, and glutamate 363.

It belongs to the IspG family. Requires [4Fe-4S] cluster as cofactor.

It catalyses the reaction (2E)-4-hydroxy-3-methylbut-2-enyl diphosphate + oxidized [flavodoxin] + H2O + 2 H(+) = 2-C-methyl-D-erythritol 2,4-cyclic diphosphate + reduced [flavodoxin]. It functions in the pathway isoprenoid biosynthesis; isopentenyl diphosphate biosynthesis via DXP pathway; isopentenyl diphosphate from 1-deoxy-D-xylulose 5-phosphate: step 5/6. In terms of biological role, converts 2C-methyl-D-erythritol 2,4-cyclodiphosphate (ME-2,4cPP) into 1-hydroxy-2-methyl-2-(E)-butenyl 4-diphosphate. This Bradyrhizobium diazoefficiens (strain JCM 10833 / BCRC 13528 / IAM 13628 / NBRC 14792 / USDA 110) protein is 4-hydroxy-3-methylbut-2-en-1-yl diphosphate synthase (flavodoxin).